A 181-amino-acid polypeptide reads, in one-letter code: Crossover junction endodeoxyribonuclease RuvC (181 aa).

Catalysis depends on residues aspartate 7, glutamate 67, and aspartate 139. Mg(2+)-binding residues include aspartate 7, glutamate 67, and aspartate 139.

Belongs to the RuvC family. As to quaternary structure, homodimer which binds Holliday junction (HJ) DNA. The HJ becomes 2-fold symmetrical on binding to RuvC with unstacked arms; it has a different conformation from HJ DNA in complex with RuvA. In the full resolvosome a probable DNA-RuvA(4)-RuvB(12)-RuvC(2) complex forms which resolves the HJ. Mg(2+) is required as a cofactor.

The protein localises to the cytoplasm. It carries out the reaction Endonucleolytic cleavage at a junction such as a reciprocal single-stranded crossover between two homologous DNA duplexes (Holliday junction).. Its function is as follows. The RuvA-RuvB-RuvC complex processes Holliday junction (HJ) DNA during genetic recombination and DNA repair. Endonuclease that resolves HJ intermediates. Cleaves cruciform DNA by making single-stranded nicks across the HJ at symmetrical positions within the homologous arms, yielding a 5'-phosphate and a 3'-hydroxyl group; requires a central core of homology in the junction. The consensus cleavage sequence is 5'-(A/T)TT(C/G)-3'. Cleavage occurs on the 3'-side of the TT dinucleotide at the point of strand exchange. HJ branch migration catalyzed by RuvA-RuvB allows RuvC to scan DNA until it finds its consensus sequence, where it cleaves and resolves the cruciform DNA. The chain is Crossover junction endodeoxyribonuclease RuvC from Bordetella avium (strain 197N).